A 590-amino-acid chain; its full sequence is Pentatricopeptide repeat-containing protein At2g46050, mitochondrial (590 aa).

The transit peptide at 1 to 109 (MRFTFLRSTR…RNIVTWNILI (109 aa)) directs the protein to the mitochondrion. PPR repeat units lie at residues 141-175 (DHVS…GLES), 176-206 (SCFP…VLDR), 207-241 (DLVL…KNRF), 244-266 (DYFT…IHAI), 275-305 (DIPV…MVVR), 306-340 (NVVS…NLQP), 341-375 (DELT…GSAD), 376-406 (FLSV…IREP), 407-437 (DLVS…MLQK), 441-471 (DKIT…MTEF), and 477-507 (EDEH…MPTE). The segment at 512–588 (ALAAFTGGCN…TPGCSWLGDY (77 aa)) is type E motif.

Belongs to the PPR family. PCMP-E subfamily.

It is found in the mitochondrion. The chain is Pentatricopeptide repeat-containing protein At2g46050, mitochondrial (PCMP-E39) from Arabidopsis thaliana (Mouse-ear cress).